The primary structure comprises 177 residues: MTRKSRRLILIAACGAVLALALGLILSAMSGSIVFFRSPAEVAAQGVPPGTRFRLGGLVKDGSVKRGPDQNVEFAVTDTNATVPVQYRGLLPDLFREGQGIVAEGTLDVGGVFRADTVLAKHDENYMPREVADALKAQGRWQEGGSKEAPKDASKAAPKDAAKPETADATLGQRSER.

Residues methionine 1–arginine 7 lie on the Cytoplasmic side of the membrane. A helical; Signal-anchor for type II membrane protein transmembrane segment spans residues leucine 8 to alanine 28. The Periplasmic segment spans residues methionine 29 to arginine 177. Heme is bound by residues histidine 122 and tyrosine 126. The segment at aspartate 133 to arginine 177 is disordered. Positions glycine 145–threonine 166 are enriched in basic and acidic residues.

It belongs to the CcmE/CycJ family.

It localises to the cell inner membrane. Its function is as follows. Heme chaperone required for the biogenesis of c-type cytochromes. Transiently binds heme delivered by CcmC and transfers the heme to apo-cytochromes in a process facilitated by CcmF and CcmH. This chain is Cytochrome c-type biogenesis protein CcmE, found in Methylorubrum extorquens (strain PA1) (Methylobacterium extorquens).